The primary structure comprises 71 residues: Putative membrane protein insertion efficiency factor (71 aa).

Belongs to the UPF0161 family.

The protein localises to the cell membrane. Functionally, could be involved in insertion of integral membrane proteins into the membrane. This chain is Putative membrane protein insertion efficiency factor, found in Ruminiclostridium cellulolyticum (strain ATCC 35319 / DSM 5812 / JCM 6584 / H10) (Clostridium cellulolyticum).